The following is a 261-amino-acid chain: Cytochrome c oxidase subunit 3 (261 aa).

Residues 1 to 15 lie on the Mitochondrial matrix side of the membrane; sequence MTHQTHAYHMVNPSP. A helical transmembrane segment spans residues 16–34; the sequence is WPLTGALSALLMTSGLIMW. Residues 35–40 are Mitochondrial intermembrane-facing; that stretch reads FHFNST. The helical transmembrane segment at 41 to 66 threads the bilayer; that stretch reads TLLMLGLTTNMLTMYQWWRDIIREST. At 67-72 the chain is on the mitochondrial matrix side; sequence FQGHHT. The chain crosses the membrane as a helical span at residues 73-105; sequence PSVQKGLRYGMILFIISEVLFFTGFFWAFYHSS. Over 106-128 the chain is Mitochondrial intermembrane; it reads LAPTPELGGCWPPTGIHPLNPLE. A helical membrane pass occupies residues 129-152; sequence VPLLNTSVLLASGVSITWAHHSLM. Over 153-155 the chain is Mitochondrial matrix; that stretch reads EGN. A helical membrane pass occupies residues 156–183; it reads RNHMLQALFITIALGVYFTLLQASEYYE. At 184–190 the chain is on the mitochondrial intermembrane side; the sequence is APFTISD. Residues 191 to 223 traverse the membrane as a helical segment; it reads GVYGSTFFVATGFHGLHVIIGSTFLIVCFFRQL. At 224–232 the chain is on the mitochondrial matrix side; it reads KFHFTSNHH. The helical transmembrane segment at 233–256 threads the bilayer; it reads FGFEAAAWYWHFVDVVWLFLYVSI. Topologically, residues 257-261 are mitochondrial intermembrane; sequence YWWGS.

This sequence belongs to the cytochrome c oxidase subunit 3 family. In terms of assembly, component of the cytochrome c oxidase (complex IV, CIV), a multisubunit enzyme composed of 14 subunits. The complex is composed of a catalytic core of 3 subunits MT-CO1, MT-CO2 and MT-CO3, encoded in the mitochondrial DNA, and 11 supernumerary subunits COX4I, COX5A, COX5B, COX6A, COX6B, COX6C, COX7A, COX7B, COX7C, COX8 and NDUFA4, which are encoded in the nuclear genome. The complex exists as a monomer or a dimer and forms supercomplexes (SCs) in the inner mitochondrial membrane with NADH-ubiquinone oxidoreductase (complex I, CI) and ubiquinol-cytochrome c oxidoreductase (cytochrome b-c1 complex, complex III, CIII), resulting in different assemblies (supercomplex SCI(1)III(2)IV(1) and megacomplex MCI(2)III(2)IV(2)).

The protein resides in the mitochondrion inner membrane. It catalyses the reaction 4 Fe(II)-[cytochrome c] + O2 + 8 H(+)(in) = 4 Fe(III)-[cytochrome c] + 2 H2O + 4 H(+)(out). Its function is as follows. Component of the cytochrome c oxidase, the last enzyme in the mitochondrial electron transport chain which drives oxidative phosphorylation. The respiratory chain contains 3 multisubunit complexes succinate dehydrogenase (complex II, CII), ubiquinol-cytochrome c oxidoreductase (cytochrome b-c1 complex, complex III, CIII) and cytochrome c oxidase (complex IV, CIV), that cooperate to transfer electrons derived from NADH and succinate to molecular oxygen, creating an electrochemical gradient over the inner membrane that drives transmembrane transport and the ATP synthase. Cytochrome c oxidase is the component of the respiratory chain that catalyzes the reduction of oxygen to water. Electrons originating from reduced cytochrome c in the intermembrane space (IMS) are transferred via the dinuclear copper A center (CU(A)) of subunit 2 and heme A of subunit 1 to the active site in subunit 1, a binuclear center (BNC) formed by heme A3 and copper B (CU(B)). The BNC reduces molecular oxygen to 2 water molecules using 4 electrons from cytochrome c in the IMS and 4 protons from the mitochondrial matrix. This chain is Cytochrome c oxidase subunit 3 (MT-CO3), found in Pelea capreolus (Gray rhebok).